We begin with the raw amino-acid sequence, 345 residues long: S-adenosylmethionine:tRNA ribosyltransferase-isomerase (345 aa).

It belongs to the QueA family. As to quaternary structure, monomer.

The protein localises to the cytoplasm. It catalyses the reaction 7-aminomethyl-7-carbaguanosine(34) in tRNA + S-adenosyl-L-methionine = epoxyqueuosine(34) in tRNA + adenine + L-methionine + 2 H(+). The protein operates within tRNA modification; tRNA-queuosine biosynthesis. Its function is as follows. Transfers and isomerizes the ribose moiety from AdoMet to the 7-aminomethyl group of 7-deazaguanine (preQ1-tRNA) to give epoxyqueuosine (oQ-tRNA). This chain is S-adenosylmethionine:tRNA ribosyltransferase-isomerase, found in Shewanella amazonensis (strain ATCC BAA-1098 / SB2B).